The sequence spans 74 residues: ATP synthase subunit 9, mitochondrial (74 aa).

The next 2 membrane-spanning stretches (helical) occupy residues 8-28 (MGAG…GNVF) and 50-70 (ILGF…AFLI).

This sequence belongs to the ATPase C chain family. In terms of assembly, F-type ATPases have 2 components, CF(1) - the catalytic core - and CF(0) - the membrane proton channel. CF(1) has five subunits: alpha(3), beta(3), gamma(1), delta(1), epsilon(1). CF(0) has three main subunits: a, b and c.

The protein localises to the mitochondrion membrane. In terms of biological role, this protein is one of the chains of the nonenzymatic membrane component (F0) of mitochondrial ATPase. This Solanum lycopersicum (Tomato) protein is ATP synthase subunit 9, mitochondrial (ATP9).